A 1093-amino-acid chain; its full sequence is Semaphorin 5c (1093 aa).

Positions 1 to 34 are cleaved as a signal peptide; that stretch reads MNMLILKLPKMFSQLWLLLILSLLTLEGPQPSTG. A glycan (N-linked (GlcNAc...) asparagine) is linked at Asn-48. The 446-residue stretch at 50–495 folds into the Sema domain; that stretch reads SRYISYQDLM…TDLALTRIPA (446 aa). Intrachain disulfides connect Cys-118-Cys-128 and Cys-146-Cys-155. Residues Asn-162, Asn-182, Asn-285, and Asn-295 are each glycosylated (N-linked (GlcNAc...) asparagine). 2 cysteine pairs are disulfide-bonded: Cys-271/Cys-376 and Cys-296/Cys-338. A glycan (N-linked (GlcNAc...) asparagine) is linked at Asn-341. The PSI domain maps to 497-546; the sequence is HCSRHVSQSSCLNSMDPYCGWNELVERCMPQPQDSSVLQHWHQAPQITCP. 3 consecutive TSP type-1 domains span residues 553-605, 607-663, and 671-726; these read DGGW…TNCT, HGGW…PPCP, and DGGW…QSCQ. N-linked (GlcNAc...) asparagine glycosylation occurs at Asn-603. Cystine bridges form between Cys-619/Cys-656, Cys-623/Cys-662, Cys-634/Cys-646, Cys-683/Cys-720, Cys-687/Cys-725, and Cys-698/Cys-710. An N-linked (GlcNAc...) asparagine glycan is attached at Asn-745. TSP type-1 domains are found at residues 794-834, 850-901, and 904-953; these read DSAD…HACP, HGEW…VPCE, and LGWS…NECE. 3 cysteine pairs are disulfide-bonded: Cys-862-Cys-895, Cys-866-Cys-900, and Cys-877-Cys-885. Residues 960 to 980 traverse the membrane as a helical segment; the sequence is TATLPIVIFVGLLFTVACCLA. Residues Asn-998 and Asn-1046 are each glycosylated (N-linked (GlcNAc...) asparagine). Positions 1018-1056 are disordered; sequence PTKDYYDQRPKRQSSFRMPAKTSNLGNGNGTLNRNNMHQ. The span at 1041-1053 shows a compositional bias: low complexity; sequence NLGNGNGTLNRNN.

The protein belongs to the semaphorin family. In terms of tissue distribution, in egg chambers, high levels of expression in the follicle cells, with little to no expression in the germ cells (at protein level). In stage 3 to 7 egg chambers, planar polarized at the basal epithelial surface (at protein level).

Its subcellular location is the apical cell membrane. It is found in the lateral cell membrane. It localises to the endosome. Regulates the motility of migrating epithelial cells by providing guidance cues within the migratory environment and may also play a role in development of the olfactory system. May act as a positive axonal guidance cue. Function in neurons is essential for adult survival and is important for climbing behavior. Promotes collective migration of follicular epithelial cells in egg chambers, likely by acting at the leading edge of the basal epithelium cells to provide guidance cues across the cell boundary to the trailing edge of the cell ahead. The transmembrane receptor PlexA on the trailing edge of the cell ahead, appears to transduce this signal to suppress the formation of protrusions. Involved in olfactory avoidance behavior. The sequence is that of Semaphorin 5c from Drosophila melanogaster (Fruit fly).